The primary structure comprises 450 residues: Serine incorporator 2 (450 aa).

11 helical membrane passes run 5–27, 40–57, 96–118, 131–150, 160–182, 203–225, 238–257, 264–286, 315–337, 380–402, and 417–439; these read LGAC…ILCG, LLFT…IIML, AVYR…MICV, GFWF…AFYI, FYFG…VDFA, AGLF…LMFV, VFIS…AVLP, PNSG…WSAL, VWWD…FISL, TYSY…MTLT, and WTSV…WTLV.

Belongs to the TDE1 family.

The protein localises to the cell membrane. It catalyses the reaction a 1,2-diacyl-sn-glycero-3-phospho-L-serine(in) = a 1,2-diacyl-sn-glycero-3-phospho-L-serine(out). The catalysed reaction is a 1,2-diacyl-sn-glycero-3-phosphocholine(in) = a 1,2-diacyl-sn-glycero-3-phosphocholine(out). It carries out the reaction a 1,2-diacyl-sn-glycero-3-phosphoethanolamine(in) = a 1,2-diacyl-sn-glycero-3-phosphoethanolamine(out). Its function is as follows. Non-ATP-dependent, non-specific lipid transporter for phosphatidylserine, phosphatidylcholine, and phosphatidylethanolamine. Functions as a scramblase that flips lipids in both directions across the membrane. In contrast to SERINC3 and SERINC5, has no effect on gammaretrovirus particles infectivity. The polypeptide is Serine incorporator 2 (Serinc2) (Mus musculus (Mouse)).